The primary structure comprises 409 residues: UDP-N-acetylglucosamine--N-acetylmuramyl-(pentapeptide) pyrophosphoryl-undecaprenol N-acetylglucosamine transferase (409 aa).

Residues 11–13, asparagine 125, arginine 169, serine 199, and glutamine 299 each bind UDP-N-acetyl-alpha-D-glucosamine; that span reads TGG.

Belongs to the glycosyltransferase 28 family. MurG subfamily.

Its subcellular location is the cell membrane. The enzyme catalyses di-trans,octa-cis-undecaprenyl diphospho-N-acetyl-alpha-D-muramoyl-L-alanyl-D-glutamyl-meso-2,6-diaminopimeloyl-D-alanyl-D-alanine + UDP-N-acetyl-alpha-D-glucosamine = di-trans,octa-cis-undecaprenyl diphospho-[N-acetyl-alpha-D-glucosaminyl-(1-&gt;4)]-N-acetyl-alpha-D-muramoyl-L-alanyl-D-glutamyl-meso-2,6-diaminopimeloyl-D-alanyl-D-alanine + UDP + H(+). It participates in cell wall biogenesis; peptidoglycan biosynthesis. Cell wall formation. Catalyzes the transfer of a GlcNAc subunit on undecaprenyl-pyrophosphoryl-MurNAc-pentapeptide (lipid intermediate I) to form undecaprenyl-pyrophosphoryl-MurNAc-(pentapeptide)GlcNAc (lipid intermediate II). The protein is UDP-N-acetylglucosamine--N-acetylmuramyl-(pentapeptide) pyrophosphoryl-undecaprenol N-acetylglucosamine transferase of Clostridioides difficile (strain 630) (Peptoclostridium difficile).